The sequence spans 417 residues: Pygopus homolog 1 (417 aa).

A compositionally biased stretch (basic and acidic residues) spans 1–11 (MSAEQDKEPIA). 3 disordered regions span residues 1–71 (MSAE…AANP), 175–265 (HFRQ…MEDP), and 284–318 (ENSR…CTPD). A compositionally biased stretch (gly residues) spans 18–27 (GDSGLDGLGG). The Nuclear localization signal signature appears at 35-41 (PDKKKRK). Polar residues-rich tracts occupy residues 180–221 (SAEN…TNHS), 240–256 (DFTQ…SSTH), and 284–305 (ENSR…QNKP). The segment at 338 to 396 (VYPCGICTNEVNDDQDAILCEASCQKWFHRICTGMTETAYGLLTAEASAVWGCDTCMAD) adopts a PHD-type zinc-finger fold. The interval 339–386 (YPCGICTNEVNDDQDAILCEASCQKWFHRICTGMTETAYGLLTAEASA) is interaction with H3K4me2. The tract at residues 371 to 389 (GMTETAYGLLTAEASAVWG) is interaction with BCL9.

As to quaternary structure, interacts with BCL9 via The PHD-type zinc finger motiv, and thereby becomes part of the nuclear beta-catenin/TCF complex. Found in a complex with BCL9L, CDC73, CTNNB1 and PYGO1. Interacts with histone H3 mono-, di- or tri-methylated at 'Lys4' (H3K4me1, H3K4me2, H3K4me3); the interaction is enhanced by the interaction with BCL9.

The protein localises to the nucleus. In terms of biological role, involved in signal transduction through the Wnt pathway. This Mus musculus (Mouse) protein is Pygopus homolog 1 (Pygo1).